The primary structure comprises 458 residues: NADH-ubiquinone oxidoreductase chain 4 (458 aa).

The next 13 helical transmembrane spans lie at 23 to 43 (LLWTATTFFSFLIAALSTLTL), 59 to 79 (IDQFSCPLIMLSCWLLPLTIM), 99 to 119 (LLILLQVLLCITFGASNLLMF), 148 to 168 (LYFLFYTLSASLPLLLALIMI), 174 to 194 (SLSIYIIPLSNLTLLLNTPWS), 197 to 217 (LWWIACFLAFLIKMPLYIFHL), 227 to 247 (PIAGSMILAAILLKLGGYGMI), 260 to 280 (LAVPFMIIAMWGMIVTSSICL), 289 to 311 (IAYSSVSHMGLVVAGIFTMTPWA), 315 to 337 (ALAMMIAHGLVSSGLLCLANITY), 355 to 375 (FPLMSFWWLMMTFANMALPPF), 396 to 416 (ILLLGLSMTLTALFSLNMLIM), and 438 to 458 (LMLMHMAPIILLIANPSAIMI).

The protein belongs to the complex I subunit 4 family.

The protein localises to the mitochondrion membrane. It catalyses the reaction a ubiquinone + NADH + 5 H(+)(in) = a ubiquinol + NAD(+) + 4 H(+)(out). In terms of biological role, core subunit of the mitochondrial membrane respiratory chain NADH dehydrogenase (Complex I) that is believed to belong to the minimal assembly required for catalysis. Complex I functions in the transfer of electrons from NADH to the respiratory chain. The immediate electron acceptor for the enzyme is believed to be ubiquinone. The polypeptide is NADH-ubiquinone oxidoreductase chain 4 (MT-ND4) (Petromyzon marinus (Sea lamprey)).